The primary structure comprises 156 residues: Small ribosomal subunit protein uS7 (156 aa).

It belongs to the universal ribosomal protein uS7 family. As to quaternary structure, part of the 30S ribosomal subunit. Contacts proteins S9 and S11.

In terms of biological role, one of the primary rRNA binding proteins, it binds directly to 16S rRNA where it nucleates assembly of the head domain of the 30S subunit. Is located at the subunit interface close to the decoding center, probably blocks exit of the E-site tRNA. The protein is Small ribosomal subunit protein uS7 of Methylorubrum populi (strain ATCC BAA-705 / NCIMB 13946 / BJ001) (Methylobacterium populi).